A 365-amino-acid polypeptide reads, in one-letter code: Protein RecA (365 aa).

73 to 80 serves as a coordination point for ATP; the sequence is GPESSGKT.

Belongs to the RecA family.

Its subcellular location is the cytoplasm. Functionally, can catalyze the hydrolysis of ATP in the presence of single-stranded DNA, the ATP-dependent uptake of single-stranded DNA by duplex DNA, and the ATP-dependent hybridization of homologous single-stranded DNAs. It interacts with LexA causing its activation and leading to its autocatalytic cleavage. This chain is Protein RecA, found in Prochlorococcus marinus (strain MIT 9301).